We begin with the raw amino-acid sequence, 117 residues long: Phosphoribosyl-ATP pyrophosphatase (117 aa).

It belongs to the PRA-PH family.

It localises to the cytoplasm. It carries out the reaction 1-(5-phospho-beta-D-ribosyl)-ATP + H2O = 1-(5-phospho-beta-D-ribosyl)-5'-AMP + diphosphate + H(+). The protein operates within amino-acid biosynthesis; L-histidine biosynthesis; L-histidine from 5-phospho-alpha-D-ribose 1-diphosphate: step 2/9. The protein is Phosphoribosyl-ATP pyrophosphatase of Rhodospirillum rubrum (strain ATCC 11170 / ATH 1.1.1 / DSM 467 / LMG 4362 / NCIMB 8255 / S1).